We begin with the raw amino-acid sequence, 131 residues long: MAKPTKGKAPRRARRNISAGRAYVHASYNNTIVTITDLDGNSVAWSSGGTIGYKGSKKGTPYAAQLAAADAVKKAQQTFGMNIVDVIVRGSGSGREQAIRAIQASGIEVKSIMDDTPVPHNGCRPKKKFRA.

This sequence belongs to the universal ribosomal protein uS11 family. In terms of assembly, part of the 30S ribosomal subunit. Interacts with proteins S7 and S18. Binds to IF-3.

In terms of biological role, located on the platform of the 30S subunit, it bridges several disparate RNA helices of the 16S rRNA. Forms part of the Shine-Dalgarno cleft in the 70S ribosome. The polypeptide is Small ribosomal subunit protein uS11 (Deinococcus deserti (strain DSM 17065 / CIP 109153 / LMG 22923 / VCD115)).